The following is a 484-amino-acid chain: MTGKATPEASVSTSEGTAPEPAKVPTPEPSGQVAASESTGQEQAPEPQKQPQAQDPAAHEAPATPATTKPEAPSEDVPSAPLQLTLEDVSHSSLTVSWEPPEDLGSWGSRAMCWSSVREGASEWVPVNPRPVMVTQQTVRNLALGDKFFLRVTAVNSAGAGPPAVLDQPVHIQEITEAPKIRVPRHLRQTYIRQVGESVNLQIPFQGKPKPQASWTHNGHALDSQRVNVRSGDQDSILFIRSAQRSDSGRYELTVRLEGLEAKAAIDILVIEKPGPPSSIKLLDVWGCNAALEWMPPQDTGNTELLGYTVQKADKKTGQWFTVLERYHPTTCTVSDLIIGNSYSFRVFSENLCGLSDLATTTKELAHIHKAAITAKPREFTERDFSEPPSFTQPVADRTSTPGYSTQLFCSVRASPKPKIIWMKNKMSIQGDPKYRAVSEQGVCTLEIRKPSPFDSGVYTCKAINVLGEPAVDCRLEVKASATH.

Residues Met-1–Pro-78 form a disordered region. Thr-2, Thr-6, and Thr-26 each carry phosphothreonine. Residues Gln-41–Glu-71 are compositionally biased toward low complexity. The region spanning Ala-80–Ile-175 is the Fibronectin type-III 1 domain. The 89-residue stretch at Pro-179 to Asp-267 folds into the Ig-like C2-type 1 domain. The region spanning Pro-276–Ala-371 is the Fibronectin type-III 2 domain. One can recognise an Ig-like C2-type 2 domain in the interval Pro-389–Lys-479.

The protein belongs to the immunoglobulin superfamily. MyBP family. Skeletal muscle.

In terms of biological role, binds to myosin; probably involved in interaction with thick myofilaments in the A-band. This chain is Myosin-binding protein H (Mybph), found in Rattus norvegicus (Rat).